The sequence spans 343 residues: Uroporphyrinogen decarboxylase (343 aa).

Residues 23–27 (RQAGR), Asp73, Tyr151, Ser206, and His319 contribute to the substrate site.

This sequence belongs to the uroporphyrinogen decarboxylase family. As to quaternary structure, homodimer.

The protein localises to the cytoplasm. It carries out the reaction uroporphyrinogen III + 4 H(+) = coproporphyrinogen III + 4 CO2. The protein operates within porphyrin-containing compound metabolism; protoporphyrin-IX biosynthesis; coproporphyrinogen-III from 5-aminolevulinate: step 4/4. Catalyzes the decarboxylation of four acetate groups of uroporphyrinogen-III to yield coproporphyrinogen-III. This Sulfurimonas denitrificans (strain ATCC 33889 / DSM 1251) (Thiomicrospira denitrificans (strain ATCC 33889 / DSM 1251)) protein is Uroporphyrinogen decarboxylase.